Here is a 277-residue protein sequence, read N- to C-terminus: 2-dehydro-3-deoxyphosphooctonate aldolase (277 aa).

This sequence belongs to the KdsA family.

Its subcellular location is the cytoplasm. The catalysed reaction is D-arabinose 5-phosphate + phosphoenolpyruvate + H2O = 3-deoxy-alpha-D-manno-2-octulosonate-8-phosphate + phosphate. Its pathway is carbohydrate biosynthesis; 3-deoxy-D-manno-octulosonate biosynthesis; 3-deoxy-D-manno-octulosonate from D-ribulose 5-phosphate: step 2/3. It functions in the pathway bacterial outer membrane biogenesis; lipopolysaccharide biosynthesis. This is 2-dehydro-3-deoxyphosphooctonate aldolase from Brucella melitensis biotype 2 (strain ATCC 23457).